Consider the following 490-residue polypeptide: tRNA-guanine(15) transglycosylase (490 aa).

Asp-90 (nucleophile) is an active-site residue. Substrate is bound by residues Asp-125 and Ala-193. Positions 276, 278, and 281 each coordinate Zn(2+).

It belongs to the archaeosine tRNA-ribosyltransferase family. It depends on Zn(2+) as a cofactor.

The enzyme catalyses guanosine(15) in tRNA + 7-cyano-7-deazaguanine = 7-cyano-7-carbaguanosine(15) in tRNA + guanine. It participates in tRNA modification; archaeosine-tRNA biosynthesis. Functionally, exchanges the guanine residue with 7-cyano-7-deazaguanine (preQ0) at position 15 in the dihydrouridine loop (D-loop) of archaeal tRNAs. In Methanosarcina acetivorans (strain ATCC 35395 / DSM 2834 / JCM 12185 / C2A), this protein is tRNA-guanine(15) transglycosylase.